Reading from the N-terminus, the 249-residue chain is Type III pantothenate kinase (249 aa).

ATP is bound at residue 6 to 13; sequence DCGNSFIK. Substrate is bound by residues Tyr-93 and 100–103; that span reads GLDR. The active-site Proton acceptor is the Asp-102. Residue Asp-122 participates in K(+) binding. Position 125 (Thr-125) interacts with ATP. Thr-181 provides a ligand contact to substrate.

It belongs to the type III pantothenate kinase family. In terms of assembly, homodimer. The cofactor is NH4(+). Requires K(+) as cofactor.

It localises to the cytoplasm. The catalysed reaction is (R)-pantothenate + ATP = (R)-4'-phosphopantothenate + ADP + H(+). Its pathway is cofactor biosynthesis; coenzyme A biosynthesis; CoA from (R)-pantothenate: step 1/5. Functionally, catalyzes the phosphorylation of pantothenate (Pan), the first step in CoA biosynthesis. The polypeptide is Type III pantothenate kinase (Pseudomonas fluorescens (strain Pf0-1)).